We begin with the raw amino-acid sequence, 84 residues long: MKLLEFLKRERKKSASVAKERLQIIVAHQRGQRDQPDYMPMLEKELLEVIRRYVQVDQDAINISLDRDNDCSVLELNVTLPRDE.

It belongs to the MinE family.

Functionally, prevents the cell division inhibition by proteins MinC and MinD at internal division sites while permitting inhibition at polar sites. This ensures cell division at the proper site by restricting the formation of a division septum at the midpoint of the long axis of the cell. The sequence is that of Cell division topological specificity factor from Chromohalobacter salexigens (strain ATCC BAA-138 / DSM 3043 / CIP 106854 / NCIMB 13768 / 1H11).